Reading from the N-terminus, the 314-residue chain is MLEIEKPKIECVARSDDATYGKFVVEPLERGYGVTLGNSLRRILLTSLFGAAVTSVKIEGVLHEFSTIPGVVEDTTDIILNLKQLAIKMHTEESRTIRVEFEGEGVVTAADILTDADVEILNPDQVIATVDKGRLFMEITVEKSRGYITATKHRKSEHAIGVIPIDANFSPVRKVNYRVEDTRVGQITNYDRLILEVWTNGSLTPEEAISWSAKIMNDYLKLFVALTENTENVEIMVETEERPQDKILEMTIEELDLSVRSYNCLKRAGINTVKDLTNKTEEDMIKVRNLGRKSLEEVDAKLAALGLSLRKSED.

The segment at 1-227 (MLEIEKPKIE…DYLKLFVALT (227 aa)) is alpha N-terminal domain (alpha-NTD). The alpha C-terminal domain (alpha-CTD) stretch occupies residues 244 to 314 (QDKILEMTIE…LGLSLRKSED (71 aa)).

The protein belongs to the RNA polymerase alpha chain family. Homodimer. The RNAP catalytic core consists of 2 alpha, 1 beta, 1 beta' and 1 omega subunit. When a sigma factor is associated with the core the holoenzyme is formed, which can initiate transcription.

The catalysed reaction is RNA(n) + a ribonucleoside 5'-triphosphate = RNA(n+1) + diphosphate. Its function is as follows. DNA-dependent RNA polymerase catalyzes the transcription of DNA into RNA using the four ribonucleoside triphosphates as substrates. This Heliobacterium modesticaldum (strain ATCC 51547 / Ice1) protein is DNA-directed RNA polymerase subunit alpha.